The sequence spans 219 residues: Vacuolar protein sorting-associated protein 32 homolog 2 (219 aa).

Coiled-coil stretches lie at residues 10–41 (KQEANALQTLDKLNETLEMLEKKEKVLLKKAG) and 117–176 (TNID…QLLQ). Residues 168–219 (EELESQLLQPATTAPPLPSVPVPAGRQPARPVPQKRTAEEEELAALQAEMAL) form a disordered region.

Belongs to the SNF7 family. As to quaternary structure, component of the endosomal sorting required for transport complex III (ESCRT-III), composed at least of VPS2, VPS20, VPS24 and VPS32. Interacts with SKD1. Interacts with BRO1/ALIX.

The protein localises to the endosome. Component of the ESCRT-III complex, which is required for multivesicular bodies (MVBs) formation and sorting of endosomal cargo proteins into MVBs. The ESCRT-III complex is probably involved in the concentration of MVB cargo. The chain is Vacuolar protein sorting-associated protein 32 homolog 2 (VPS32.2) from Arabidopsis thaliana (Mouse-ear cress).